Here is a 236-residue protein sequence, read N- to C-terminus: Ribonuclease PH (236 aa).

Phosphate is bound by residues Arg86 and 124–126 (GTR).

This sequence belongs to the RNase PH family. Homohexameric ring arranged as a trimer of dimers.

It catalyses the reaction tRNA(n+1) + phosphate = tRNA(n) + a ribonucleoside 5'-diphosphate. Phosphorolytic 3'-5' exoribonuclease that plays an important role in tRNA 3'-end maturation. Removes nucleotide residues following the 3'-CCA terminus of tRNAs; can also add nucleotides to the ends of RNA molecules by using nucleoside diphosphates as substrates, but this may not be physiologically important. Probably plays a role in initiation of 16S rRNA degradation (leading to ribosome degradation) during starvation. This chain is Ribonuclease PH, found in Thermodesulfovibrio yellowstonii (strain ATCC 51303 / DSM 11347 / YP87).